A 74-amino-acid chain; its full sequence is Small ribosomal subunit protein bS18 (74 aa).

It belongs to the bacterial ribosomal protein bS18 family. Part of the 30S ribosomal subunit. Forms a tight heterodimer with protein bS6.

Binds as a heterodimer with protein bS6 to the central domain of the 16S rRNA, where it helps stabilize the platform of the 30S subunit. In Coprothermobacter proteolyticus (strain ATCC 35245 / DSM 5265 / OCM 4 / BT), this protein is Small ribosomal subunit protein bS18.